The chain runs to 35 residues: Photosystem II reaction center protein T (35 aa).

A helical membrane pass occupies residues 3–23 (ALVYTFLLVSTLGIIFFAIFF).

Belongs to the PsbT family. In terms of assembly, PSII is composed of 1 copy each of membrane proteins PsbA, PsbB, PsbC, PsbD, PsbE, PsbF, PsbH, PsbI, PsbJ, PsbK, PsbL, PsbM, PsbT, PsbY, PsbZ, Psb30/Ycf12, at least 3 peripheral proteins of the oxygen-evolving complex and a large number of cofactors. It forms dimeric complexes.

It localises to the plastid. The protein resides in the chloroplast thylakoid membrane. Found at the monomer-monomer interface of the photosystem II (PS II) dimer, plays a role in assembly and dimerization of PSII. PSII is a light-driven water plastoquinone oxidoreductase, using light energy to abstract electrons from H(2)O, generating a proton gradient subsequently used for ATP formation. The chain is Photosystem II reaction center protein T from Cycas revoluta (Sago palm).